A 305-amino-acid chain; its full sequence is Translation initiation factor eIF2B subunit alpha (305 aa).

Residue K35 is modified to N6-acetyllysine.

It belongs to the eIF-2B alpha/beta/delta subunits family. Component of the translation initiation factor 2B (eIF2B) complex which is a heterodecamer of two sets of five different subunits: alpha, beta, gamma, delta and epsilon. Subunits alpha, beta and delta comprise a regulatory subcomplex and subunits epsilon and gamma comprise a catalytic subcomplex. Within the complex, the hexameric regulatory complex resides at the center, with the two heterodimeric catalytic subcomplexes bound on opposite sides.

The protein resides in the cytoplasm. It is found in the cytosol. Its activity is regulated as follows. Activated by the chemical integrated stress response (ISR) inhibitor ISRIB which stimulates guanine nucleotide exchange factor activity for both phosphorylated and unphosphorylated eIF2. Functionally, acts as a component of the translation initiation factor 2B (eIF2B) complex, which catalyzes the exchange of GDP for GTP on eukaryotic initiation factor 2 (eIF2) gamma subunit. Its guanine nucleotide exchange factor activity is repressed when bound to eIF2 complex phosphorylated on the alpha subunit, thereby limiting the amount of methionyl-initiator methionine tRNA available to the ribosome and consequently global translation is repressed. This is Translation initiation factor eIF2B subunit alpha (EIF2B1) from Macaca fascicularis (Crab-eating macaque).